A 79-amino-acid chain; its full sequence is Sec-independent protein translocase protein TatA (79 aa).

The chain crosses the membrane as a helical span at residues 1 to 21 (MGSLSIWHWLIVLLIVALVFG). Residues 46–79 (ADAPAAEAQQRELPRNGAVDVEAKEKTPRSGDYR) form a disordered region. The span at 66-79 (VEAKEKTPRSGDYR) shows a compositional bias: basic and acidic residues.

This sequence belongs to the TatA/E family. The Tat system comprises two distinct complexes: a TatABC complex, containing multiple copies of TatA, TatB and TatC subunits, and a separate TatA complex, containing only TatA subunits. Substrates initially bind to the TatABC complex, which probably triggers association of the separate TatA complex to form the active translocon.

It localises to the cell inner membrane. Its function is as follows. Part of the twin-arginine translocation (Tat) system that transports large folded proteins containing a characteristic twin-arginine motif in their signal peptide across membranes. TatA could form the protein-conducting channel of the Tat system. In Paraburkholderia phytofirmans (strain DSM 17436 / LMG 22146 / PsJN) (Burkholderia phytofirmans), this protein is Sec-independent protein translocase protein TatA.